Consider the following 507-residue polypeptide: Arylsulfatase A (507 aa).

A signal peptide spans 1-18; sequence MEALWTLTLALAAGLAAA. Ca(2+)-binding residues include Asp29, Asp30, and Cys69. The active-site Nucleophile is the Cys69. The residue at position 69 (Cys69) is a 3-oxoalanine (Cys). Lys123 provides a ligand contact to substrate. His125 is a catalytic residue. Position 150 (Ser150) interacts with substrate. Cystine bridges form between Cys156/Cys172 and Cys161/Cys168. Asn158 is a glycosylation site (N-linked (GlcNAc...) asparagine). Asn184 carries an N-linked (GlcNAc...) asparagine glycan. His229 contributes to the substrate binding site. Asp281 and Asn282 together coordinate Ca(2+). Disulfide bonds link Cys300/Cys414, Cys488/Cys500, Cys489/Cys502, and Cys493/Cys499. Substrate is bound at residue Lys302. An N-linked (GlcNAc...) asparagine glycan is attached at Asn350.

The protein belongs to the sulfatase family. Homodimer at neutral pH and homooctamer at acidic pH. Exists both as a single chain of 58 kDa (component A) or as a chain of 50 kDa (component B) linked by disulfide bond(s) to a 7 kDa chain (component C). Interacts with SUMF1. It depends on Ca(2+) as a cofactor. The conversion to 3-oxoalanine (also known as C-formylglycine, FGly), of a serine or cysteine residue in prokaryotes and of a cysteine residue in eukaryotes, is critical for catalytic activity. This post-translational modification is severely defective in multiple sulfatase deficiency (MSD).

The protein resides in the endoplasmic reticulum. The protein localises to the lysosome. It carries out the reaction an N-acyl-1-beta-D-(3-O-sulfo)-galactosyl-sphing-4-enine + H2O = a beta-D-galactosyl-(1&lt;-&gt;1')-N-acylsphing-4-enine + sulfate + H(+). Hydrolyzes cerebroside sulfate. In Bos taurus (Bovine), this protein is Arylsulfatase A (ARSA).